The chain runs to 255 residues: Epoxyqueuosine reductase QueH (255 aa).

Positions 44, 45, 128, and 131 each coordinate [4Fe-4S] cluster. Cysteine 210 and cysteine 212 are joined by a disulfide.

Belongs to the QueH family.

The enzyme catalyses epoxyqueuosine(34) in tRNA + AH2 = queuosine(34) in tRNA + A + H2O. It functions in the pathway tRNA modification; tRNA-queuosine biosynthesis. Functionally, catalyzes the conversion of epoxyqueuosine (oQ) to queuosine (Q), which is a hypermodified base found in the wobble positions of tRNA(Asp), tRNA(Asn), tRNA(His) and tRNA(Tyr). The polypeptide is Epoxyqueuosine reductase QueH (Streptococcus pyogenes serotype M1).